A 399-amino-acid polypeptide reads, in one-letter code: Protochlorophyllide reductase, chloroplastic (399 aa).

The transit peptide at 1–64 (MALQTASMLP…RQKVGAVRAE (64 aa)) directs the protein to the chloroplast.

The protein belongs to the short-chain dehydrogenases/reductases (SDR) family. POR subfamily.

Its subcellular location is the plastid. The protein resides in the chloroplast. It carries out the reaction chlorophyllide a + NADP(+) = protochlorophyllide a + NADPH + H(+). It functions in the pathway porphyrin-containing compound metabolism; chlorophyll biosynthesis. Phototransformation of protochlorophyllide (Pchlide) to chlorophyllide (Chlide). The sequence is that of Protochlorophyllide reductase, chloroplastic (3PCR) from Pisum sativum (Garden pea).